Here is a 345-residue protein sequence, read N- to C-terminus: Type II methyltransferase M.AplI (345 aa).

The 301-residue stretch at 25–325 (LVVLDLFAGC…KSVKMTLENK (301 aa)) folds into the SAM-dependent MTase C5-type domain. Residue Cys-93 is part of the active site.

It belongs to the class I-like SAM-binding methyltransferase superfamily. C5-methyltransferase family.

The enzyme catalyses a 2'-deoxycytidine in DNA + S-adenosyl-L-methionine = a 5-methyl-2'-deoxycytidine in DNA + S-adenosyl-L-homocysteine + H(+). A methylase, recognizes the double-stranded sequence 5'-CTGCAG-3', methylates C-4 on both strands, and protects the DNA from cleavage by the AplI endonuclease. This Arthrospira platensis (strain NIES-39 / UTEX 3086 / IAM M-135) (Spirulina platensis) protein is Type II methyltransferase M.AplI (aplIM).